A 468-amino-acid polypeptide reads, in one-letter code: F-box/LRR-repeat protein At4g14096 (468 aa).

The region spanning 7–60 (RDIISSLPEAISCHILSFLPTKEAASTSVLSKKWRYLFAFVPNLDLDESVYLNP) is the F-box domain. LRR repeat units follow at residues 114–136 (VSDLDLHVYMETEFVFPSEMFLS), 138–167 (TLVRLKLMLYPLLEFEDVYLPKLKTLYIDS), 169–194 (YFEKYGIGLTKLLSGCPILEDLVLDD), 216–241 (STQVRDEFPKSVSIDTPNLVYLKFTD), 292–323 (TLYLSSNTLQVLTYSCDAIPIFNNLTHLTIES), and 324–349 (NPEVGWQSLPGLLKNSPNLETLIFQG).

In Arabidopsis thaliana (Mouse-ear cress), this protein is F-box/LRR-repeat protein At4g14096.